The sequence spans 284 residues: ATP synthase gamma chain (284 aa).

This sequence belongs to the ATPase gamma chain family. In terms of assembly, F-type ATPases have 2 components, CF(1) - the catalytic core - and CF(0) - the membrane proton channel. CF(1) has five subunits: alpha(3), beta(3), gamma(1), delta(1), epsilon(1). CF(0) has three main subunits: a, b and c.

The protein localises to the cell membrane. Produces ATP from ADP in the presence of a proton gradient across the membrane. The gamma chain is believed to be important in regulating ATPase activity and the flow of protons through the CF(0) complex. This is ATP synthase gamma chain from Pelotomaculum thermopropionicum (strain DSM 13744 / JCM 10971 / SI).